Consider the following 97-residue polypeptide: Small ribosomal subunit protein eS25 (97 aa).

Positions 1-24 are disordered; it reads MAPAASGAKKQKKKWSKGKVKDKA. Residues 9-18 are compositionally biased toward basic residues; the sequence is KKQKKKWSKG.

The protein belongs to the eukaryotic ribosomal protein eS25 family. In terms of assembly, component of the small ribosomal subunit (SSU). Mature N.crassa ribosomes consist of a small (40S) and a large (60S) subunit. The 40S small subunit contains 1 molecule of ribosomal RNA (18S rRNA) and at least 32 different proteins. The large 60S subunit contains 3 rRNA molecules (26S, 5.8S and 5S rRNA) and at least 42 different proteins.

The protein resides in the cytoplasm. In terms of biological role, component of the ribosome, a large ribonucleoprotein complex responsible for the synthesis of proteins in the cell. The small ribosomal subunit (SSU) binds messenger RNAs (mRNAs) and translates the encoded message by selecting cognate aminoacyl-transfer RNA (tRNA) molecules. The large subunit (LSU) contains the ribosomal catalytic site termed the peptidyl transferase center (PTC), which catalyzes the formation of peptide bonds, thereby polymerizing the amino acids delivered by tRNAs into a polypeptide chain. The nascent polypeptides leave the ribosome through a tunnel in the LSU and interact with protein factors that function in enzymatic processing, targeting, and the membrane insertion of nascent chains at the exit of the ribosomal tunnel. In Neurospora crassa (strain ATCC 24698 / 74-OR23-1A / CBS 708.71 / DSM 1257 / FGSC 987), this protein is Small ribosomal subunit protein eS25 (rps-25).